A 452-amino-acid polypeptide reads, in one-letter code: Keratin, type I cytoskeletal 42 (452 aa).

A head region spans residues 4–93 (TTSVRQFSTS…GVSDALLGGS (90 aa)). The coil 1A stretch occupies residues 94-129 (EKETMQNLNDRLATYLDRVRALEEANADLEVKIREW). Residues 94-405 (EKETMQNLND…RLLEGEDAHL (312 aa)) form the IF rod domain. Residues 130–147 (YKKQGPGPARDYSPYFKT) are linker 1. The coil 1B stretch occupies residues 148–239 (IEDLRNKILA…KNHEEEMNAL (92 aa)). Residues 240 to 262 (RGQVGGDVNVEMDAAPGVDLSRI) form a linker 12 region. The segment at 263–401 (LNEMRDQYEK…ATYRRLLEGE (139 aa)) is coil 2. The segment at 402 to 452 (DAHLATQYSSSLASQPSREGMVTSRQVRTIVEEVQDGKVVSSREQVHRSTH) is tail.

This sequence belongs to the intermediate filament family. As to quaternary structure, heterodimer of a type I and a type II keratin. Colocalizes with KRT8/KRT18 filament network. As to expression, expressed in nail matrix and nail bed epithelium (at protein level). Also expressed in tongue and digits with weak expression in vibrissae and in both filiform and fungiform papillae of oral mucosa.

It is found in the cytoplasm. This Mus musculus (Mouse) protein is Keratin, type I cytoskeletal 42.